Consider the following 191-residue polypeptide: Ribosome hibernation promotion factor (191 aa).

A disordered region spans residues 100–123 (KQRQEGRPEPLPGPAEAEVNAQGS).

This sequence belongs to the HPF/YfiA ribosome-associated protein family. Long HPF subfamily. Interacts with 100S ribosomes.

Its subcellular location is the cytoplasm. In terms of biological role, required for dimerization of active 70S ribosomes into 100S ribosomes in stationary phase; 100S ribosomes are translationally inactive and sometimes present during exponential growth. The chain is Ribosome hibernation promotion factor from Deinococcus radiodurans (strain ATCC 13939 / DSM 20539 / JCM 16871 / CCUG 27074 / LMG 4051 / NBRC 15346 / NCIMB 9279 / VKM B-1422 / R1).